The following is a 342-amino-acid chain: Anthranilate phosphoribosyltransferase (342 aa).

5-phospho-alpha-D-ribose 1-diphosphate contacts are provided by residues glycine 80, glycine 83–aspartate 84, threonine 88, asparagine 90–threonine 93, lysine 108–serine 116, and serine 120. Glycine 80 is an anthranilate binding site. Serine 92 lines the Mg(2+) pocket. Position 111 (asparagine 111) interacts with anthranilate. Residue arginine 166 coordinates anthranilate. Aspartate 225 and glutamate 226 together coordinate Mg(2+).

This sequence belongs to the anthranilate phosphoribosyltransferase family. In terms of assembly, homodimer. Mg(2+) serves as cofactor.

It carries out the reaction N-(5-phospho-beta-D-ribosyl)anthranilate + diphosphate = 5-phospho-alpha-D-ribose 1-diphosphate + anthranilate. It participates in amino-acid biosynthesis; L-tryptophan biosynthesis; L-tryptophan from chorismate: step 2/5. In terms of biological role, catalyzes the transfer of the phosphoribosyl group of 5-phosphorylribose-1-pyrophosphate (PRPP) to anthranilate to yield N-(5'-phosphoribosyl)-anthranilate (PRA). The chain is Anthranilate phosphoribosyltransferase from Halalkalibacterium halodurans (strain ATCC BAA-125 / DSM 18197 / FERM 7344 / JCM 9153 / C-125) (Bacillus halodurans).